Reading from the N-terminus, the 102-residue chain is ATP-dependent Clp protease adapter protein ClpS (102 aa).

The protein belongs to the ClpS family. In terms of assembly, binds to the N-terminal domain of the chaperone ClpA.

Its function is as follows. Involved in the modulation of the specificity of the ClpAP-mediated ATP-dependent protein degradation. This Shewanella oneidensis (strain ATCC 700550 / JCM 31522 / CIP 106686 / LMG 19005 / NCIMB 14063 / MR-1) protein is ATP-dependent Clp protease adapter protein ClpS.